Reading from the N-terminus, the 441-residue chain is DNA primase DnaG (441 aa).

The Toprim domain occupies 165–241 (DTIIIVEGRA…DIDYVARAPP (77 aa)). Residues Glu171, Asp215, and Asp217 each coordinate Mg(2+). Over residues 299–315 (KEEVAERGEEMESKAEG) the composition is skewed to basic and acidic residues. Positions 299–320 (KEEVAERGEEMESKAEGAEQPT) are disordered.

It belongs to the archaeal DnaG primase family. Forms a ternary complex with MCM helicase and DNA. Component of the archaeal exosome complex. The cofactor is Mg(2+).

It catalyses the reaction ssDNA + n NTP = ssDNA/pppN(pN)n-1 hybrid + (n-1) diphosphate.. RNA polymerase that catalyzes the synthesis of short RNA molecules used as primers for DNA polymerase during DNA replication. Also part of the exosome, which is a complex involved in RNA degradation. Acts as a poly(A)-binding protein that enhances the interaction between heteromeric, adenine-rich transcripts and the exosome. The polypeptide is DNA primase DnaG (Ignicoccus hospitalis (strain KIN4/I / DSM 18386 / JCM 14125)).